Reading from the N-terminus, the 334-residue chain is Adenosine deaminase (334 aa).

Positions 12 and 14 each coordinate Zn(2+). The substrate site is built by histidine 14, aspartate 16, and glycine 170. Zn(2+) is bound at residue histidine 197. The Proton donor role is filled by glutamate 200. Aspartate 278 is a binding site for Zn(2+). Aspartate 279 contributes to the substrate binding site.

Belongs to the metallo-dependent hydrolases superfamily. Adenosine and AMP deaminases family. Adenosine deaminase subfamily. The cofactor is Zn(2+).

The catalysed reaction is adenosine + H2O + H(+) = inosine + NH4(+). The enzyme catalyses 2'-deoxyadenosine + H2O + H(+) = 2'-deoxyinosine + NH4(+). Its function is as follows. Catalyzes the hydrolytic deamination of adenosine and 2-deoxyadenosine. This Yersinia pseudotuberculosis serotype O:1b (strain IP 31758) protein is Adenosine deaminase.